The primary structure comprises 278 residues: Deoxyribonuclease-1-like 2 (278 aa).

The signal sequence occupies residues 1 to 21 (MGWPWAPLTAVWALGVMGATA). Residues Glu99 and His150 contribute to the active site. Cys189 and Cys225 are joined by a disulfide.

It belongs to the DNase I family. The cofactor is Mg(2+). Ca(2+) serves as cofactor.

It is found in the cytoplasm. The protein localises to the secreted. In terms of biological role, divalent cation-dependent acid DNA endonuclease involved in the breakdown of the nucleus during corneocyte formation of epidermal keratinocytes. May play an immune role by eliminating harmful DNA released into the extracellular environment by damaged epidermal cells. The sequence is that of Deoxyribonuclease-1-like 2 (Dnase1l2) from Mus musculus (Mouse).